Here is a 475-residue protein sequence, read N- to C-terminus: MNKFDEFIESNEKDLDVDTSTRNSIISMSPVRKTGRKIRSASSNGYRLEHHRTSSAGSMHSQRLMTPTRLNDQDHPLQAKPDARRVVTRHSSVSVPNAMSKRRSLIQPMVVPTTPESQNNLPSVSHSEGSYGIPLESTTVLSSEQAMASGLRRSRNGSSQSVNSMIATTIPTNGVDVSALLQSLATKELELLECKQKIEDLKKQTQHEEQNYTRRARELHELKEQVSKHLDPSLNTPVKNRAFSPVYQNIPLESRTENAGNSSLPSSVSKPKNMGHQSTNQSRSVSPQDIQERRQRDDSSDSSKQSLWSKPLALFNQFDKIIQHEIERTLNWDDSLSGTPEVQEGTPTSNSESSAQQYDNEAPGARQKSPSQGSVSRSLWSFVSDVKAGLLGIEEENDNDVITDNRCDPVYKSDRQHEQKKSTHKITNRGQAEDSGDDSSLNTRKFKTTTKFQKDNAGNNSLTDESGHRTREKKK.

The tract at residues R32–Q62 is disordered. Residues A179 to D231 are a coiled coil. Residue T236 is modified to Phosphothreonine. 2 positions are modified to phosphoserine: S244 and S286. Disordered regions lie at residues L252–S306, W332–R377, and D400–K475. Over residues E257–P287 the composition is skewed to polar residues. Positions I290–D301 are enriched in basic and acidic residues. 2 stretches are compositionally biased toward polar residues: residues W332–D359 and K368–R377. The span at T403–K421 shows a compositional bias: basic and acidic residues.

The protein belongs to the TDA11 family.

The protein resides in the cytoplasm. In Saccharomyces cerevisiae (strain Lalvin QA23) (Baker's yeast), this protein is Topoisomerase I damage affected protein 11 (TDA11).